The primary structure comprises 184 residues: dCTP deaminase (184 aa).

Residues 107–112, 131–133, Q152, Y166, and Q176 contribute to the dCTP site; these read KSTYAR and TLE. Residue E133 is the Proton donor/acceptor of the active site.

It belongs to the dCTP deaminase family. In terms of assembly, homotrimer.

It catalyses the reaction dCTP + H2O + H(+) = dUTP + NH4(+). Its pathway is pyrimidine metabolism; dUMP biosynthesis; dUMP from dCTP (dUTP route): step 1/2. Catalyzes the deamination of dCTP to dUTP. This is dCTP deaminase from Novosphingobium aromaticivorans (strain ATCC 700278 / DSM 12444 / CCUG 56034 / CIP 105152 / NBRC 16084 / F199).